Consider the following 240-residue polypeptide: Ribonuclease PH (240 aa).

Residues R87 and 125–127 contribute to the phosphate site; that span reads GTR.

It belongs to the RNase PH family. In terms of assembly, homohexameric ring arranged as a trimer of dimers.

The catalysed reaction is tRNA(n+1) + phosphate = tRNA(n) + a ribonucleoside 5'-diphosphate. In terms of biological role, phosphorolytic 3'-5' exoribonuclease that plays an important role in tRNA 3'-end maturation. Removes nucleotide residues following the 3'-CCA terminus of tRNAs; can also add nucleotides to the ends of RNA molecules by using nucleoside diphosphates as substrates, but this may not be physiologically important. Probably plays a role in initiation of 16S rRNA degradation (leading to ribosome degradation) during starvation. The protein is Ribonuclease PH of Pseudomonas syringae pv. syringae (strain B728a).